The primary structure comprises 248 residues: Probable transcriptional regulator LumQ (248 aa).

The HTH araC/xylS-type domain maps to 148–246 (VLIDNYIEQH…GMSPTRYQFF (99 aa)). DNA-binding regions (H-T-H motif) lie at residues 165–186 (AELS…KSQM) and 213–236 (LSQV…RRLY).

In terms of biological role, probable transcriptional regulator. Its target gene(s) is not yet known. This chain is Probable transcriptional regulator LumQ (lumQ), found in Photobacterium leiognathi.